The primary structure comprises 437 residues: Elongator complex protein 4 (437 aa).

The tract at residues Phe-179–Leu-247 is disordered. Residues Lys-181–Gln-192 show a composition bias toward polar residues. A Phosphoserine modification is found at Ser-183. Residues Ser-220–Ser-237 show a composition bias toward low complexity. Phosphoserine is present on Ser-242.

This sequence belongs to the ELP4 family. Component of the elongator complex composed of Elp1, Elp2, Elp3, Elp4, Elp5 and Elp6. The elongator complex associates with and stabilizes microtubules; efficient interaction requires the full complex.

The protein localises to the cytoplasm. It localises to the nucleus. It is found in the cytoskeleton. The protein resides in the spindle. Its pathway is tRNA modification; 5-methoxycarbonylmethyl-2-thiouridine-tRNA biosynthesis. Functionally, component of the elongator complex, which is required for multiple tRNA modifications, including mcm5U (5-methoxycarbonylmethyl uridine), mcm5s2U (5-methoxycarbonylmethyl-2-thiouridine), and ncm5U (5-carbamoylmethyl uridine). The elongator complex catalyzes the formation of carboxymethyluridine in the wobble base at position 34 in tRNAs. Binding by the elongator complex stabilizes microtubules and promotes their growth. This induces central spindle asymmetry, promoting polarized signaling endosome trafficking during asymmetric cell division and cell fate assignation of sensory organ precursor cells. This is Elongator complex protein 4 from Drosophila melanogaster (Fruit fly).